A 311-amino-acid polypeptide reads, in one-letter code: Aspartate carbamoyltransferase catalytic subunit (311 aa).

Carbamoyl phosphate contacts are provided by arginine 52 and threonine 53. Lysine 80 contacts L-aspartate. Residues arginine 102, histidine 131, and glutamine 134 each coordinate carbamoyl phosphate. L-aspartate contacts are provided by arginine 164 and arginine 216. Carbamoyl phosphate-binding residues include alanine 259 and proline 260.

This sequence belongs to the aspartate/ornithine carbamoyltransferase superfamily. ATCase family. In terms of assembly, heterododecamer (2C3:3R2) of six catalytic PyrB chains organized as two trimers (C3), and six regulatory PyrI chains organized as three dimers (R2).

The enzyme catalyses carbamoyl phosphate + L-aspartate = N-carbamoyl-L-aspartate + phosphate + H(+). It participates in pyrimidine metabolism; UMP biosynthesis via de novo pathway; (S)-dihydroorotate from bicarbonate: step 2/3. Catalyzes the condensation of carbamoyl phosphate and aspartate to form carbamoyl aspartate and inorganic phosphate, the committed step in the de novo pyrimidine nucleotide biosynthesis pathway. This Lactiplantibacillus plantarum (strain ATCC BAA-793 / NCIMB 8826 / WCFS1) (Lactobacillus plantarum) protein is Aspartate carbamoyltransferase catalytic subunit.